The following is a 436-amino-acid chain: Methanethiol oxidase (436 aa).

The signal sequence occupies residues 1 to 24 (MKRREFGALAAGALAMGLPFRAFA).

Belongs to the selenium-binding protein family.

Its subcellular location is the periplasm. It carries out the reaction methanethiol + O2 + H2O = hydrogen sulfide + formaldehyde + H2O2 + H(+). Its pathway is organosulfur degradation. Functionally, catalyzes the oxidation of methanethiol. The chain is Methanethiol oxidase from Ruegeria pomeroyi (strain ATCC 700808 / DSM 15171 / DSS-3) (Silicibacter pomeroyi).